A 338-amino-acid polypeptide reads, in one-letter code: Phenylalanine--tRNA ligase alpha subunit (338 aa).

E253 is a Mg(2+) binding site.

It belongs to the class-II aminoacyl-tRNA synthetase family. Phe-tRNA synthetase alpha subunit type 1 subfamily. As to quaternary structure, tetramer of two alpha and two beta subunits. Requires Mg(2+) as cofactor.

Its subcellular location is the cytoplasm. It catalyses the reaction tRNA(Phe) + L-phenylalanine + ATP = L-phenylalanyl-tRNA(Phe) + AMP + diphosphate + H(+). In Geobacter sp. (strain M21), this protein is Phenylalanine--tRNA ligase alpha subunit.